The primary structure comprises 161 residues: MSGHGAPDIDLTTLNPAETSQLRLAIVAASWHTQIMDGLLDGALRAAKDAGINEPTVIRVPGSFELPVAAARLAPHFDAVVALGVVIRGGTPHFEYVCQAATSGLTDVSVRTGVPVGFGVLTCDTEQQGLDRAGLPGSKEDKGHEAVTAALATAVVLKQYS.

5-amino-6-(D-ribitylamino)uracil contacts are provided by residues tryptophan 31, 63–65 (SFE), and 85–87 (VVI). 90–91 (GT) lines the (2S)-2-hydroxy-3-oxobutyl phosphate pocket. The active-site Proton donor is histidine 93. Phenylalanine 118 is a 5-amino-6-(D-ribitylamino)uracil binding site. Arginine 132 is a binding site for (2S)-2-hydroxy-3-oxobutyl phosphate.

The protein belongs to the DMRL synthase family.

The catalysed reaction is (2S)-2-hydroxy-3-oxobutyl phosphate + 5-amino-6-(D-ribitylamino)uracil = 6,7-dimethyl-8-(1-D-ribityl)lumazine + phosphate + 2 H2O + H(+). It functions in the pathway cofactor biosynthesis; riboflavin biosynthesis; riboflavin from 2-hydroxy-3-oxobutyl phosphate and 5-amino-6-(D-ribitylamino)uracil: step 1/2. Catalyzes the formation of 6,7-dimethyl-8-ribityllumazine by condensation of 5-amino-6-(D-ribitylamino)uracil with 3,4-dihydroxy-2-butanone 4-phosphate. This is the penultimate step in the biosynthesis of riboflavin. The chain is 6,7-dimethyl-8-ribityllumazine synthase from Pseudarthrobacter chlorophenolicus (strain ATCC 700700 / DSM 12829 / CIP 107037 / JCM 12360 / KCTC 9906 / NCIMB 13794 / A6) (Arthrobacter chlorophenolicus).